A 138-amino-acid polypeptide reads, in one-letter code: Acidic phospholipase A2 Tpu-E6a (138 aa).

A signal peptide spans 1-16 (MRTLWIMAVLLLGVKG). Disulfide bonds link cysteine 42–cysteine 131, cysteine 44–cysteine 60, cysteine 59–cysteine 111, cysteine 65–cysteine 138, cysteine 66–cysteine 104, cysteine 73–cysteine 97, and cysteine 91–cysteine 102. Tyrosine 43, glycine 45, and glycine 47 together coordinate Ca(2+). Residue histidine 63 is part of the active site. Ca(2+) is bound at residue aspartate 64. Aspartate 105 is a catalytic residue.

Monomer. Requires Ca(2+) as cofactor. Expressed by the venom gland.

The protein resides in the secreted. It catalyses the reaction a 1,2-diacyl-sn-glycero-3-phosphocholine + H2O = a 1-acyl-sn-glycero-3-phosphocholine + a fatty acid + H(+). Functionally, snake venom phospholipase A2 (PLA2) that impairs hemostasis. It weakly inhibits ADP-induced platelet aggregation when tested on platelet rich plasma from human and rabbit blood (15-25% of inhibition at 5-10 ug of enzyme), and dose-dependently inhibits blood coagulation, possibly by inhibiting thrombin activation. Exhibits high hydrolytic activities toward L-dipalmitoyl phosphatidylcholine. PLA2 catalyzes the calcium-dependent hydrolysis of the 2-acyl groups in 3-sn-phosphoglycerides. In Craspedocephalus puniceus (Flat-nosed pitviper), this protein is Acidic phospholipase A2 Tpu-E6a.